The sequence spans 130 residues: MSWQAYVDEHLMCEIEGHHLTSAAIVGHDGAVWAQSTAFPQFKTEEMTNIMKDFDEPGFLAPTGLFLGPTKYMVIQGEPGAVIRGKKGSGGITVKKTGQAMVVGIYDEPMTPGQCNMVVERLGDYLLNRA.

C13 and C115 form a disulfide bridge. An Involved in PIP2 interaction motif is present at residues 81–97 (AVIRGKKGSGGITVKKT). T111 is modified (phosphothreonine).

Belongs to the profilin family. Occurs in many kinds of cells as a complex with monomeric actin in a 1:1 ratio. Phosphorylated by MAP kinases.

It is found in the cytoplasm. Its subcellular location is the cytoskeleton. In terms of biological role, binds to actin and affects the structure of the cytoskeleton. At high concentrations, profilin prevents the polymerization of actin, whereas it enhances it at low concentrations. The chain is Profilin-12 from Zea mays (Maize).